Reading from the N-terminus, the 357-residue chain is Heat-inducible transcription repressor HrcA (357 aa).

The protein belongs to the HrcA family.

Its function is as follows. Negative regulator of class I heat shock genes (grpE-dnaK-dnaJ and groELS operons). Prevents heat-shock induction of these operons. The protein is Heat-inducible transcription repressor HrcA of Chlorobium luteolum (strain DSM 273 / BCRC 81028 / 2530) (Pelodictyon luteolum).